The primary structure comprises 231 residues: NADH-ubiquinone oxidoreductase chain 4 (231 aa).

The next 6 helical transmembrane spans lie at 1 to 21 (PIAGSMVLAAILLKLGGYGII), 34 to 54 (MFIPFIVLALWGAILANLTCL), 63 to 85 (IAYSSISHMGLVVATIIIQTPWG), 89 to 111 (AMALMIAHGFTSSALFCLANTTY), 128 to 148 (ILPMTTTWWLLANLMNIAMPP), and 169 to 189 (TIIMLGLSMLITASYSLHMFL).

This sequence belongs to the complex I subunit 4 family.

The protein localises to the mitochondrion membrane. The catalysed reaction is a ubiquinone + NADH + 5 H(+)(in) = a ubiquinol + NAD(+) + 4 H(+)(out). In terms of biological role, core subunit of the mitochondrial membrane respiratory chain NADH dehydrogenase (Complex I) that is believed to belong to the minimal assembly required for catalysis. Complex I functions in the transfer of electrons from NADH to the respiratory chain. The immediate electron acceptor for the enzyme is believed to be ubiquinone. The protein is NADH-ubiquinone oxidoreductase chain 4 (MT-ND4) of Lachesis muta muta (Bushmaster).